A 902-amino-acid chain; its full sequence is Auxin response factor 5 (902 aa).

A DNA-binding region (TF-B3) is located at residues F158–N260. Positions S497–G543 are disordered. One can recognise a PB1 domain in the interval R793–E877.

Belongs to the ARF family. As to quaternary structure, homodimers and heterodimers. Interacts with BRX and the auxin-responsive proteins IAA1, IAA12 (BODENLOS), IAA17 and ARF7. In terms of tissue distribution, expressed in the whole plant with a lower expression in leaves. Detected in embryo axis, provascular tissues, procambium and some differentiated vascular regions of mature organs.

It is found in the nucleus. In terms of biological role, auxin response factors (ARFs) are transcriptional factors that bind specifically to the DNA sequence 5'-TGTCTC-3' found in the auxin-responsive promoter elements (AuxREs). Seems to act as transcriptional activator. Formation of heterodimers with Aux/IAA proteins may alter their ability to modulate early auxin response genes expression. Mediates embryo axis formation and vascular tissues differentiation. Functionally redundant with ARF7. May be necessary to counteract AMP1 activity. This is Auxin response factor 5 (ARF5) from Arabidopsis thaliana (Mouse-ear cress).